Consider the following 337-residue polypeptide: DNA-directed RNA polymerase subunit alpha (337 aa).

An alpha N-terminal domain (alpha-NTD) region spans residues 1–233; it reads MIQKNWQELI…DQLSIFVNFE (233 aa). An alpha C-terminal domain (alpha-CTD) region spans residues 249–337; sequence FNPALLKKVD…DLAKRYEDQY (89 aa).

Belongs to the RNA polymerase alpha chain family. As to quaternary structure, homodimer. The RNAP catalytic core consists of 2 alpha, 1 beta, 1 beta' and 1 omega subunit. When a sigma factor is associated with the core the holoenzyme is formed, which can initiate transcription.

The enzyme catalyses RNA(n) + a ribonucleoside 5'-triphosphate = RNA(n+1) + diphosphate. In terms of biological role, DNA-dependent RNA polymerase catalyzes the transcription of DNA into RNA using the four ribonucleoside triphosphates as substrates. The polypeptide is DNA-directed RNA polymerase subunit alpha (Brucella ovis (strain ATCC 25840 / 63/290 / NCTC 10512)).